The primary structure comprises 430 residues: Histidine--tRNA ligase (430 aa).

The protein belongs to the class-II aminoacyl-tRNA synthetase family. Homodimer.

It is found in the cytoplasm. It catalyses the reaction tRNA(His) + L-histidine + ATP = L-histidyl-tRNA(His) + AMP + diphosphate + H(+). This Chlorobium luteolum (strain DSM 273 / BCRC 81028 / 2530) (Pelodictyon luteolum) protein is Histidine--tRNA ligase.